The sequence spans 161 residues: Cyclic pyranopterin monophosphate synthase (161 aa).

Residues leucine 75–histidine 77 and methionine 113–glutamate 114 contribute to the substrate site. Residue aspartate 128 is part of the active site.

Belongs to the MoaC family. As to quaternary structure, homohexamer; trimer of dimers.

The enzyme catalyses (8S)-3',8-cyclo-7,8-dihydroguanosine 5'-triphosphate = cyclic pyranopterin phosphate + diphosphate. The protein operates within cofactor biosynthesis; molybdopterin biosynthesis. Functionally, catalyzes the conversion of (8S)-3',8-cyclo-7,8-dihydroguanosine 5'-triphosphate to cyclic pyranopterin monophosphate (cPMP). In Methylobacillus flagellatus (strain ATCC 51484 / DSM 6875 / VKM B-1610 / KT), this protein is Cyclic pyranopterin monophosphate synthase.